Here is a 681-residue protein sequence, read N- to C-terminus: Chaperone protein HtpG (681 aa).

The interval 1-326 is a; substrate-binding; sequence MQKGNIGVTT…SPDIPLNVSR (326 aa). The segment at 327–545 is b; the sequence is SYLQSDSNVK…YMRRMKEMAN (219 aa). Residues 546 to 681 form a c region; the sequence is IQAGMSFYGE…NFVKRSIELI (136 aa). Residues 589–620 are disordered; that stretch reads IQTEMNSVSKRRNELKDSQKDKKEEDIPTAEK. The segment covering 599 to 620 has biased composition (basic and acidic residues); it reads RRNELKDSQKDKKEEDIPTAEK.

Belongs to the heat shock protein 90 family. As to quaternary structure, homodimer.

The protein resides in the cytoplasm. In terms of biological role, molecular chaperone. Has ATPase activity. The sequence is that of Chaperone protein HtpG from Bacteroides thetaiotaomicron (strain ATCC 29148 / DSM 2079 / JCM 5827 / CCUG 10774 / NCTC 10582 / VPI-5482 / E50).